We begin with the raw amino-acid sequence, 298 residues long: uncharacterized protein (298 aa).

This sequence to M.tuberculosis Rv1486c, M.bovis Mb1522c and M.avium MAV321.

This is an uncharacterized protein from Mycobacterium leprae (strain TN).